The sequence spans 680 residues: MKMKKFQIPVSFQDLTVNFTQEEWQQLDPAQRLLYRDVMLENYSNLVSVGYHVSKPDVIFKLEQGEEPWIVEEFSNQNYPDIDDALEKNKEIQDKHLTQTVFFSNKTLITERENVFGKTLNLGMNSVPSRKMPYKCNPGGNSLKTNSEVIVAKKSKENRKIPDGYSGFGKHEKSHLGMKKYRYNPMRKASNQNENLILHQNIQILKQPFDYNKCGKTFFKRAILITQKGRQTERKPNECNECRKTFSKRSTLIVHQRIHTGEKPYVCSDCRKTFRVKTSLTRHRRIHTGERPYECSECRKTFIDKSALIVHQKIHGGEKSYECNECGKTFFRKSALAEHFRSHTGEKPYECKECGNAFSKKSYLVVHQRTHRGEKPNECKECGKTFFCQSALTAHQRIHTGEKPYECSECEKTFFCQSALNVHRRSHTGEKPYECSQCGKFLCTKSALIAHQITHRGKKSYECNECGKFFCHKSTLTIHQRTHTGEKHGVFNKCGRISIVKSNCSQCKRMNTKENLYECSEHGHAVSKNSHLIVHQRTIWERPYECNECGRTYCRKSALTHHQRTHTGQRPYECNECGKTFCQKFSFVEHQRTHTGEKPYECNECGKSFCHKSAFRVHRRIHTGEKPYECNQCGKTYRRLWTLTEHQKIHTGEKPYECNKCEKTFRHKSNFLLHQKSHKE.

The KRAB domain occupies 10–81; sequence VSFQDLTVNF…EEFSNQNYPD (72 aa). 14 consecutive C2H2-type zinc fingers follow at residues 237-259, 265-287, 293-315, 321-343, 349-371, 377-399, 405-427, 433-455, 461-483, 544-566, 572-594, 600-622, 628-650, and 656-678; these read NECN…QRIH, YVCS…RRIH, YECS…QKIH, YECN…FRSH, YECK…QRTH, NECK…QRIH, YECS…RRSH, YECS…QITH, YECN…QRTH, YECN…RRIH, YECN…QKIH, and YECN…QKSH.

Belongs to the krueppel C2H2-type zinc-finger protein family.

It is found in the nucleus. Functionally, may be involved in transcriptional regulation. The protein is Zinc finger protein 334 (ZNF334) of Homo sapiens (Human).